Consider the following 167-residue polypeptide: Small ribosomal subunit protein mS25 (167 aa).

It belongs to the mitochondrion-specific ribosomal protein mS25 family. In terms of assembly, component of the mitochondrial ribosome small subunit (28S) which comprises a 12S rRNA and about 30 distinct proteins.

It localises to the mitochondrion. This chain is Small ribosomal subunit protein mS25 (mRpS25), found in Drosophila melanogaster (Fruit fly).